Here is a 161-residue protein sequence, read N- to C-terminus: D-amino-acid N-acetyltransferase HPA3 (161 aa).

S2 bears the N-acetylserine mark. The N-acetyltransferase domain maps to 14–161; sequence IVVKAIEPKD…DKVLYKRNGY (148 aa). Residue 98–111 participates in acetyl-CoA binding; that stretch reads LYVTERARVKGVGR.

It belongs to the acetyltransferase family. GNAT subfamily. Post-translationally, autoacetylates in an intermolecular reaction.

It is found in the cytoplasm. It localises to the nucleus. The catalysed reaction is a D-alpha-amino acid + acetyl-CoA = an N-acetyl-D-amino acid + CoA + H(+). Functionally, N-acetyltransferase that acts on a wide range of D-amino acids. Catalyzes the N-acetylation through an ordered bi-bi mechanism, in which acetyl-CoA is the first substrate to be bound and CoA is the last product to be liberated. D-amino acids are toxic for the cell and their N-acetylation, preceding removal from cells, plays an important role in detoxification of D-amino acids. In vitro, capable of acetylating histone H4 at 'Lys-8' and polyamines like putrescine, spermidine and spermine. This Saccharomyces cerevisiae (strain ATCC 204508 / S288c) (Baker's yeast) protein is D-amino-acid N-acetyltransferase HPA3.